The chain runs to 92 residues: UPF0223 protein EF_2462 (92 aa).

It belongs to the UPF0223 family.

This Enterococcus faecalis (strain ATCC 700802 / V583) protein is UPF0223 protein EF_2462.